The chain runs to 388 residues: Processive diacylglycerol beta-glucosyltransferase (388 aa).

The protein belongs to the glycosyltransferase 28 family. UgtP subfamily.

It is found in the cell membrane. The catalysed reaction is a 1,2-diacyl-3-O-(beta-D-glucopyranosyl)-sn-glycerol + UDP-alpha-D-glucose = a 1,2-diacyl-3-O-(beta-D-Glc-(1-&gt;6)-beta-D-Glc)-sn-glycerol + UDP + H(+). It catalyses the reaction a 1,2-diacyl-3-O-(beta-D-Glc-(1-&gt;6)-beta-D-Glc)-sn-glycerol + UDP-alpha-D-glucose = a 1,2-diacyl-3-O-(beta-D-Glc-(1-&gt;6)-beta-D-Glc-(1-&gt;6)-beta-D-Glc)-sn-glycerol + UDP + H(+). The enzyme catalyses a 1,2-diacyl-sn-glycerol + UDP-alpha-D-glucose = a 1,2-diacyl-3-O-(beta-D-glucopyranosyl)-sn-glycerol + UDP + H(+). The protein operates within glycolipid metabolism; diglucosyl-diacylglycerol biosynthesis. Its function is as follows. Processive glucosyltransferase involved in the biosynthesis of both the bilayer- and non-bilayer-forming membrane glucolipids. Is able to successively transfer up to three glucosyl residues to diacylglycerol (DAG), thereby catalyzing the formation of beta-monoglucosyl-DAG (3-O-(beta-D-glucopyranosyl)-1,2-diacyl-sn-glycerol), beta-diglucosyl-DAG (3-O-(beta-D-glucopyranosyl-beta-(1-&gt;6)-D-glucopyranosyl)-1,2-diacyl-sn-glycerol) and beta-triglucosyl-DAG (3-O-(beta-D-glucopyranosyl-beta-(1-&gt;6)-D-glucopyranosyl-beta-(1-&gt;6)-D-glucopyranosyl)-1,2-diacyl-sn-glycerol). Beta-diglucosyl-DAG is the predominant glycolipid found in Bacillales and is also used as a membrane anchor for lipoteichoic acid (LTA). In Bacillus cereus (strain B4264), this protein is Processive diacylglycerol beta-glucosyltransferase.